Consider the following 474-residue polypeptide: tRNA-2-methylthio-N(6)-dimethylallyladenosine synthase (474 aa).

Residues 3–120 (KKLLIKTWGC…LPEMIKQSQS (118 aa)) enclose the MTTase N-terminal domain. [4Fe-4S] cluster is bound by residues Cys12, Cys49, Cys83, Cys157, Cys161, and Cys164. The Radical SAM core domain occupies 143 to 375 (RAEGATAFVS…QQQINAQAMR (233 aa)). The TRAM domain occupies 378 to 441 (RLMLGTEQRV…ANSLRGEIVR (64 aa)).

It belongs to the methylthiotransferase family. MiaB subfamily. In terms of assembly, monomer. [4Fe-4S] cluster is required as a cofactor.

The protein resides in the cytoplasm. It catalyses the reaction N(6)-dimethylallyladenosine(37) in tRNA + (sulfur carrier)-SH + AH2 + 2 S-adenosyl-L-methionine = 2-methylsulfanyl-N(6)-dimethylallyladenosine(37) in tRNA + (sulfur carrier)-H + 5'-deoxyadenosine + L-methionine + A + S-adenosyl-L-homocysteine + 2 H(+). Catalyzes the methylthiolation of N6-(dimethylallyl)adenosine (i(6)A), leading to the formation of 2-methylthio-N6-(dimethylallyl)adenosine (ms(2)i(6)A) at position 37 in tRNAs that read codons beginning with uridine. This chain is tRNA-2-methylthio-N(6)-dimethylallyladenosine synthase, found in Vibrio vulnificus (strain CMCP6).